The chain runs to 201 residues: tRNA (guanine-N(7)-)-methyltransferase (201 aa).

S-adenosyl-L-methionine is bound by residues E33, E58, D85, and D106. D106 is a catalytic residue. Residues K110, D142, and 180–183 each bind substrate; that span reads TTYE.

Belongs to the class I-like SAM-binding methyltransferase superfamily. TrmB family.

The enzyme catalyses guanosine(46) in tRNA + S-adenosyl-L-methionine = N(7)-methylguanosine(46) in tRNA + S-adenosyl-L-homocysteine. The protein operates within tRNA modification; N(7)-methylguanine-tRNA biosynthesis. In terms of biological role, catalyzes the formation of N(7)-methylguanine at position 46 (m7G46) in tRNA. This is tRNA (guanine-N(7)-)-methyltransferase from Mesomycoplasma hyopneumoniae (strain J / ATCC 25934 / NCTC 10110) (Mycoplasma hyopneumoniae).